Here is a 38-residue protein sequence, read N- to C-terminus: Photosystem II reaction center protein L (38 aa).

Residues 17–37 traverse the membrane as a helical segment; it reads SLYWGLLLIFVLAVLFSNYSF.

Belongs to the PsbL family. As to quaternary structure, PSII is composed of 1 copy each of membrane proteins PsbA, PsbB, PsbC, PsbD, PsbE, PsbF, PsbH, PsbI, PsbJ, PsbK, PsbL, PsbM, PsbT, PsbX, PsbY, PsbZ, Psb30/Ycf12, at least 3 peripheral proteins of the oxygen-evolving complex and a large number of cofactors. It forms dimeric complexes.

The protein resides in the plastid. It is found in the chloroplast thylakoid membrane. Its function is as follows. One of the components of the core complex of photosystem II (PSII). PSII is a light-driven water:plastoquinone oxidoreductase that uses light energy to abstract electrons from H(2)O, generating O(2) and a proton gradient subsequently used for ATP formation. It consists of a core antenna complex that captures photons, and an electron transfer chain that converts photonic excitation into a charge separation. This subunit is found at the monomer-monomer interface and is required for correct PSII assembly and/or dimerization. The sequence is that of Photosystem II reaction center protein L from Bowenia serrulata (Byfield fern).